The chain runs to 102 residues: Small ribosomal subunit protein uS10 (102 aa).

It belongs to the universal ribosomal protein uS10 family. In terms of assembly, part of the 30S ribosomal subunit.

Involved in the binding of tRNA to the ribosomes. The sequence is that of Small ribosomal subunit protein uS10 from Limosilactobacillus reuteri (strain DSM 20016) (Lactobacillus reuteri).